A 123-amino-acid polypeptide reads, in one-letter code: MARIKVHELRQKTKAELLNQLKDLKAELALLRVAKVTGGAPNKLSKIKVVRLSIAQVLTVISQKQKLALREAYKNKKFLPLDLRPKKTRAIRRRLTKHQQSLKTEREKKKEMYFPMRKYAIKV.

It belongs to the universal ribosomal protein uL29 family.

The protein is Large ribosomal subunit protein uL29 (RPL35) of Euphorbia esula (Leafy spurge).